Consider the following 250-residue polypeptide: Bis(5'-nucleosyl)-tetraphosphatase PrpE [asymmetrical] (250 aa).

Belongs to the PrpE family. The cofactor is Ni(2+).

The enzyme catalyses P(1),P(4)-bis(5'-guanosyl) tetraphosphate + H2O = GMP + GTP + 2 H(+). Functionally, asymmetrically hydrolyzes Ap4p to yield AMP and ATP. The protein is Bis(5'-nucleosyl)-tetraphosphatase PrpE [asymmetrical] of Oceanobacillus iheyensis (strain DSM 14371 / CIP 107618 / JCM 11309 / KCTC 3954 / HTE831).